The primary structure comprises 194 residues: dCTP deaminase, dUMP-forming (194 aa).

Residues 104-109 (RSSLGR), aspartate 122, 130-132 (TLE), glutamine 151, tyrosine 165, lysine 172, and glutamine 176 contribute to the dCTP site. The active-site Proton donor/acceptor is the glutamate 132.

This sequence belongs to the dCTP deaminase family. As to quaternary structure, homotrimer.

It carries out the reaction dCTP + 2 H2O = dUMP + NH4(+) + diphosphate. It participates in pyrimidine metabolism; dUMP biosynthesis; dUMP from dCTP: step 1/1. Bifunctional enzyme that catalyzes both the deamination of dCTP to dUTP and the hydrolysis of dUTP to dUMP without releasing the toxic dUTP intermediate. The chain is dCTP deaminase, dUMP-forming from Dictyoglomus turgidum (strain DSM 6724 / Z-1310).